A 76-amino-acid polypeptide reads, in one-letter code: Nemertide alpha-1 (76 aa).

Positions 1–28 are cleaved as a signal peptide; that stretch reads YRIASSSIAKMKTAVFLVGLLFLGLVFA. The propeptide occupies 29–44; that stretch reads DEAAIDSEFDQSIDKR. 3 disulfide bridges follow: C46–C60, C53–C64, and C59–C70. P72 and P73 each carry 4-hydroxyproline.

It belongs to the nemertide family. In terms of tissue distribution, confined to the epidermis and to the mucus layer.

Its subcellular location is the secreted. Functionally, highly potent toxin against insect sodium channel (Nav) and with less potent activity against mammalian sodium channels. Potently inhibits inactivation of insect sodium channels of B.germanica (BgNav1) (EC(50)=8.6 nM), D.melanogaster (Dm Nav1), and arachnid sodium channel V.destructor (VdNav1). Also delays the inactivation of most mammalian Nav channels tested (human Nav1.1/SCN1A; EC(50)=124.1 nM, rat Nav1.2/SCN2A; EC(50)=359.6 nM, rat Nav1.3/SCN3A; EC(50)=135.4 nM, rat Nav1.4/SCN4A; EC(50)=145.5 nM, human Nav1.5/SCN5A; EC(50)=138.3 nM, mouse Nav1.6/SCN8A; EC(50)=240.4 nM, human Nav1.9/SCN9A; EC(50)=76.5 nM). 1 uM is enough to completely inhibits the inactivation, resulting in sustained non-inactivating currents. In addition, the toxin significantly enhances the recovery from inactivation, and the open state is not required for the toxin to interact with the channel. In vivo, injection into green crabs (Carcinus maenas at 1 mug/kg) of small doses (1-5 ug/kg) results in slow and fast permanent paralysis, whereas injection of high doses (more than 10 ug/kg) causes death. Injection into juvenile Blaptica dubia cockroaches results in death or permanent paralysis at doses higher than 7.1 ug/kg. Injection into brine shrimp (Artemia salina) stops movement or causes death after 24 hours (EC(50)=0.3 uM). In the rare inherited cardiac arrhythmia Brugada syndrome 1 (BRGDA1), this toxin is able to restore the loss of function by reducing channel inactivation, without affecting activation, by binding to Nav1.5/SCN5A. In Lineus lacteus (Ribbon worm), this protein is Nemertide alpha-1.